Reading from the N-terminus, the 203-residue chain is uncharacterized protein (203 aa).

The signal sequence occupies residues 1 to 20 (MDELILPILILLFLVFVAYF).

This is an uncharacterized protein from Pasteurella multocida (strain Pm70).